The chain runs to 127 residues: Large ribosomal subunit protein bL19 (127 aa).

The protein belongs to the bacterial ribosomal protein bL19 family.

Its function is as follows. This protein is located at the 30S-50S ribosomal subunit interface and may play a role in the structure and function of the aminoacyl-tRNA binding site. In Cupriavidus pinatubonensis (strain JMP 134 / LMG 1197) (Cupriavidus necator (strain JMP 134)), this protein is Large ribosomal subunit protein bL19.